A 304-amino-acid polypeptide reads, in one-letter code: NAD kinase (304 aa).

Residue aspartate 77 is the Proton acceptor of the active site. NAD(+)-binding positions include 77–78 (DG), arginine 82, 151–152 (NE), arginine 162, aspartate 181, and 192–197 (TAYSFS).

Belongs to the NAD kinase family. A divalent metal cation serves as cofactor.

It localises to the cytoplasm. The enzyme catalyses NAD(+) + ATP = ADP + NADP(+) + H(+). Its function is as follows. Involved in the regulation of the intracellular balance of NAD and NADP, and is a key enzyme in the biosynthesis of NADP. Catalyzes specifically the phosphorylation on 2'-hydroxyl of the adenosine moiety of NAD to yield NADP. The polypeptide is NAD kinase (Leifsonia xyli subsp. xyli (strain CTCB07)).